Here is a 459-residue protein sequence, read N- to C-terminus: Exodeoxyribonuclease 7 large subunit (459 aa).

Belongs to the XseA family. In terms of assembly, heterooligomer composed of large and small subunits.

It is found in the cytoplasm. The enzyme catalyses Exonucleolytic cleavage in either 5'- to 3'- or 3'- to 5'-direction to yield nucleoside 5'-phosphates.. Bidirectionally degrades single-stranded DNA into large acid-insoluble oligonucleotides, which are then degraded further into small acid-soluble oligonucleotides. This is Exodeoxyribonuclease 7 large subunit from Pseudomonas syringae pv. tomato (strain ATCC BAA-871 / DC3000).